A 127-amino-acid polypeptide reads, in one-letter code: UPF0102 protein Glov_2230 (127 aa).

This sequence belongs to the UPF0102 family.

The polypeptide is UPF0102 protein Glov_2230 (Trichlorobacter lovleyi (strain ATCC BAA-1151 / DSM 17278 / SZ) (Geobacter lovleyi)).